A 1059-amino-acid chain; its full sequence is Cellulose synthase catalytic subunit A [UDP-forming] (1059 aa).

Disordered regions lie at residues 1-159 (MDRN…RFDT) and 174-220 (MRQH…KHVA). Residues 15 to 36 (NNINSSGGSYNNSMNNSSNNIG) show a composition bias toward low complexity. Polar residues-rich tracts occupy residues 40–57 (GNNQ…QSNL) and 142–154 (NSPS…TSGG). A compositionally biased stretch (low complexity) spans 181-194 (QEQQQQQQQQQQQQ). The span at 204–219 (QKKKPSSMQLSKKKHV) shows a compositional bias: basic residues. Helical transmembrane passes span 246 to 266 (FSHA…IFYF), 280 to 300 (ITFS…LGSA), and 306 to 323 (FTNP…QILA). The segment at 328–628 (KHPTVMMYVC…FLGLLDADQQ (301 aa)) is catalytic subdomain A. D370 is a catalytic residue. Substrate is bound by residues D624 and D626. A catalytic subdomain B region spans residues 701-761 (QPLYDIGGIM…EQRKRWAQGA (61 aa)). The active site involves D717. Transmembrane regions (helical) follow at residues 790–810 (IYPF…IMSI) and 813–833 (VPIV…PVMV). The disordered stretch occupies residues 933 to 953 (DNAQESSGKHKAEQSFRTSNK). The segment covering 939–953 (SGKHKAEQSFRTSNK) has biased composition (basic and acidic residues). The next 3 membrane-spanning stretches (helical) occupy residues 963 to 983 (LFLP…SAVL), 993 to 1013 (WLLV…WSFI), and 1035 to 1055 (IVLF…KVCI).

It belongs to the glycosyltransferase 2 family. The cofactor is Mg(2+).

Its subcellular location is the membrane. It carries out the reaction [(1-&gt;4)-beta-D-glucosyl](n) + UDP-alpha-D-glucose = [(1-&gt;4)-beta-D-glucosyl](n+1) + UDP + H(+). It participates in glycan metabolism; amoeba cellulose biosynthesis. Catalytic subunit of cellulose synthase. It incorporates glucose from uridine 5'-diphosphate glucose (UDP-alpha-D-glucose) to cellulose (a (1-&gt;4)-beta-D-glucan), which is produced as an extracellular component for mechanical and chemical protection at the onset of the stalk formation, when the cells exhibit multicellular behavior during culmination. This is Cellulose synthase catalytic subunit A [UDP-forming] (dcsA) from Dictyostelium discoideum (Social amoeba).